Here is a 237-residue protein sequence, read N- to C-terminus: N-(5'-phosphoribosyl)anthranilate isomerase (237 aa).

Belongs to the TrpF family.

It carries out the reaction N-(5-phospho-beta-D-ribosyl)anthranilate = 1-(2-carboxyphenylamino)-1-deoxy-D-ribulose 5-phosphate. It participates in amino-acid biosynthesis; L-tryptophan biosynthesis; L-tryptophan from chorismate: step 3/5. The sequence is that of N-(5'-phosphoribosyl)anthranilate isomerase (TRP1) from Komagataella pastoris (Yeast).